The primary structure comprises 157 residues: Ribosomal RNA large subunit methyltransferase H (157 aa).

Residues leucine 73, glycine 104, and 123 to 128 (LGPLTL) each bind S-adenosyl-L-methionine.

The protein belongs to the RNA methyltransferase RlmH family. Homodimer.

It is found in the cytoplasm. The catalysed reaction is pseudouridine(1915) in 23S rRNA + S-adenosyl-L-methionine = N(3)-methylpseudouridine(1915) in 23S rRNA + S-adenosyl-L-homocysteine + H(+). Functionally, specifically methylates the pseudouridine at position 1915 (m3Psi1915) in 23S rRNA. In Xylella fastidiosa (strain M23), this protein is Ribosomal RNA large subunit methyltransferase H.